We begin with the raw amino-acid sequence, 533 residues long: Lysophosphatidylcholine acyltransferase (533 aa).

Over 1–79 (MTTSTIKPTG…VLTVLLLPIR (79 aa)) the chain is Cytoplasmic. A helical; Signal-anchor for type II membrane protein membrane pass occupies residues 80 to 100 (VVGCVLSLISAWMFACIGLYG). Residues 101–533 (MTLDDLKAKP…PKAVVTTAEN (433 aa)) lie on the Lumenal side of the membrane. The HXXXXD motif motif lies at 158–163 (HSSYVD). 3 EF-hand domains span residues 402–437 (LKNT…CKLK), 439–474 (SDLL…AGGK), and 475–510 (LNEQ…QKSS).

It belongs to the 1-acyl-sn-glycerol-3-phosphate acyltransferase family.

It localises to the endoplasmic reticulum membrane. Its subcellular location is the golgi apparatus membrane. The protein resides in the lipid droplet. It carries out the reaction a 1-acyl-sn-glycero-3-phosphocholine + an acyl-CoA = a 1,2-diacyl-sn-glycero-3-phosphocholine + CoA. The protein operates within lipid metabolism; phospholipid metabolism. Acetyltransferase which mediates the conversion of 1-acyl-sn-glycero-3-phosphocholine (LPC) into phosphatidylcholine (PC). Has a calcium-independent activity. Displays a clear preference for saturated fatty acyl-CoAs, and 1-myristoyl or 1-palmitoyl LPC as acyl donors and acceptors, respectively. Involved in the regulation of lipid droplet number and size. This Drosophila melanogaster (Fruit fly) protein is Lysophosphatidylcholine acyltransferase.